A 452-amino-acid chain; its full sequence is Tubulin alpha-1D chain (452 aa).

The short motif at 1-4 (MREC) is the MREC motif element. Position 11 (Gln-11) interacts with GTP. Position 40 is an N6-acetyllysine (Lys-40). Residues Glu-71, Ser-140, Gly-144, Thr-145, Thr-179, Asn-206, and Asn-228 each coordinate GTP. Residue Glu-71 coordinates Mg(2+). The active site involves Glu-254. Tyr-282 bears the 3'-nitrotyrosine mark. Residues 432–452 (YEEVGMDSVEGEGEEEEGDEY) are disordered. Position 439 is a phosphoserine (Ser-439). Residue Glu-446 is modified to 5-glutamyl polyglutamate. Position 452 is a 3'-nitrotyrosine (Tyr-452).

This sequence belongs to the tubulin family. In terms of assembly, dimer of alpha and beta chains. A typical microtubule is a hollow water-filled tube with an outer diameter of 25 nm and an inner diameter of 15 nM. Alpha-beta heterodimers associate head-to-tail to form protofilaments running lengthwise along the microtubule wall with the beta-tubulin subunit facing the microtubule plus end conferring a structural polarity. Microtubules usually have 13 protofilaments but different protofilament numbers can be found in some organisms and specialized cells. It depends on Mg(2+) as a cofactor. Post-translationally, some glutamate residues at the C-terminus are polyglycylated, resulting in polyglycine chains on the gamma-carboxyl group. Glycylation is mainly limited to tubulin incorporated into axonemes (cilia and flagella) whereas glutamylation is prevalent in neuronal cells, centrioles, axonemes, and the mitotic spindle. Both modifications can coexist on the same protein on adjacent residues, and lowering polyglycylation levels increases polyglutamylation, and reciprocally. Cilia and flagella glycylation is required for their stability and maintenance. Flagella glycylation controls sperm motility. In terms of processing, some glutamate residues at the C-terminus are polyglutamylated, resulting in polyglutamate chains on the gamma-carboxyl group. Polyglutamylation plays a key role in microtubule severing by spastin (SPAST). SPAST preferentially recognizes and acts on microtubules decorated with short polyglutamate tails: severing activity by SPAST increases as the number of glutamates per tubulin rises from one to eight, but decreases beyond this glutamylation threshold. Glutamylation is also involved in cilia motility. Acetylation of alpha chains at Lys-40 is located inside the microtubule lumen. This modification has been correlated with increased microtubule stability, intracellular transport and ciliary assembly. Post-translationally, methylation of alpha chains at Lys-40 is found in mitotic microtubules and is required for normal mitosis and cytokinesis contributing to genomic stability. In terms of processing, nitration of Tyr-452 is irreversible and interferes with normal dynein intracellular distribution. Undergoes a tyrosination/detyrosination cycle, the cyclic removal and re-addition of a C-terminal tyrosine residue by the enzymes tubulin tyrosine carboxypeptidase (MATCAP, VASH1 or VASH2) and tubulin tyrosine ligase (TTL), respectively. Post-translationally, tyrosination promotes microtubule interaction with CAP-Gly domain-containing proteins such as CLIP1, CLIP2 and DCTN1. Tyrosination regulates the initiation of dynein-dynactin motility via interaction with DCTN1, which brings the dynein-dynactin complex into contact with microtubules. In neurons, tyrosinated tubulins mediate the initiation of retrograde vesicle transport. In terms of processing, detyrosination is involved in metaphase plate congression by guiding chromosomes during mitosis: detyrosination promotes interaction with CENPE, promoting pole-proximal transport of chromosomes toward the equator. Detyrosination increases microtubules-dependent mechanotransduction in dystrophic cardiac and skeletal muscle. In cardiomyocytes, detyrosinated microtubules are required to resist to contractile compression during contraction: detyrosination promotes association with desmin (DES) at force-generating sarcomeres, leading to buckled microtubules and mechanical resistance to contraction.

The protein localises to the cytoplasm. Its subcellular location is the cytoskeleton. The catalysed reaction is GTP + H2O = GDP + phosphate + H(+). In terms of biological role, tubulin is the major constituent of microtubules, a cylinder consisting of laterally associated linear protofilaments composed of alpha- and beta-tubulin heterodimers. Microtubules grow by the addition of GTP-tubulin dimers to the microtubule end, where a stabilizing cap forms. Below the cap, tubulin dimers are in GDP-bound state, owing to GTPase activity of alpha-tubulin. This chain is Tubulin alpha-1D chain (TUBA1D), found in Bos taurus (Bovine).